Reading from the N-terminus, the 568-residue chain is Cyclin-dependent kinase-like 2 (568 aa).

The Protein kinase domain maps to 4 to 289 (YENLGLVGEG…CADLLRHDFF (286 aa)). ATP-binding positions include 10–18 (VGEGSYGMV) and lysine 33. A [NKR]KIAxRE motif is present at residues 45-51 (KKIAMRE). Aspartate 126 acts as the Proton acceptor in catalysis. 2 disordered regions span residues 309–333 (DARN…LGEE) and 545–568 (SHQG…EHQH). The span at 322-333 (RKKEKDDALGEE) shows a compositional bias: basic and acidic residues.

Belongs to the protein kinase superfamily. CMGC Ser/Thr protein kinase family. CDC2/CDKX subfamily. Expressed in testis, kidney, lung and brain.

The protein resides in the cytoplasm. The protein localises to the nucleus. It catalyses the reaction L-seryl-[protein] + ATP = O-phospho-L-seryl-[protein] + ADP + H(+). It carries out the reaction L-threonyl-[protein] + ATP = O-phospho-L-threonyl-[protein] + ADP + H(+). The sequence is that of Cyclin-dependent kinase-like 2 from Mus musculus (Mouse).